We begin with the raw amino-acid sequence, 521 residues long: NAD(P)H-quinone oxidoreductase subunit 2 (521 aa).

Transmembrane regions (helical) follow at residues Ile-16 to Gly-36, Val-40 to Val-60, Leu-80 to Val-100, Leu-110 to Ala-130, Leu-133 to Tyr-153, Leu-168 to Leu-188, Leu-212 to Val-232, Pro-246 to Ile-266, Trp-280 to Leu-300, Met-308 to Ser-328, Val-336 to Phe-356, Leu-380 to Gly-400, Ile-402 to Val-422, and Val-468 to Phe-488.

This sequence belongs to the complex I subunit 2 family. As to quaternary structure, NDH-1 can be composed of about 15 different subunits; different subcomplexes with different compositions have been identified which probably have different functions.

It localises to the cellular thylakoid membrane. It catalyses the reaction a plastoquinone + NADH + (n+1) H(+)(in) = a plastoquinol + NAD(+) + n H(+)(out). The enzyme catalyses a plastoquinone + NADPH + (n+1) H(+)(in) = a plastoquinol + NADP(+) + n H(+)(out). Functionally, NDH-1 shuttles electrons from an unknown electron donor, via FMN and iron-sulfur (Fe-S) centers, to quinones in the respiratory and/or the photosynthetic chain. The immediate electron acceptor for the enzyme in this species is believed to be plastoquinone. Couples the redox reaction to proton translocation, and thus conserves the redox energy in a proton gradient. Cyanobacterial NDH-1 also plays a role in inorganic carbon-concentration. This chain is NAD(P)H-quinone oxidoreductase subunit 2, found in Synechocystis sp. (strain ATCC 27184 / PCC 6803 / Kazusa).